The chain runs to 898 residues: Conserved oligomeric Golgi complex subunit 5 (898 aa).

Residues 1–30 (MNNNNNNNEGVSSSSSSSSSPLPNISSPNL) are disordered. The stretch at 129 to 192 (DTLKLGVSNL…VKKLKNHLQA (64 aa)) forms a coiled coil. Disordered regions lie at residues 311 to 339 (NNNNSNNNITTNNNNNNYNNNNNNNNNNN), 519 to 551 (SNNSNSNSNNSIESSLSTSSSSSSSSSSSSSTT), and 679 to 705 (STGGVNNNSNSNNNNEIITINENSKPT). Over residues 679–702 (STGGVNNNSNSNNNNEIITINENS) the composition is skewed to low complexity.

The protein resides in the golgi apparatus membrane. The chain is Conserved oligomeric Golgi complex subunit 5 (cog5) from Dictyostelium discoideum (Social amoeba).